A 248-amino-acid polypeptide reads, in one-letter code: Ubiquinone biosynthesis O-methyltransferase (248 aa).

S-adenosyl-L-methionine-binding residues include Arg40, Gly71, Asp92, and Met135.

The protein belongs to the methyltransferase superfamily. UbiG/COQ3 family.

The catalysed reaction is a 3-demethylubiquinol + S-adenosyl-L-methionine = a ubiquinol + S-adenosyl-L-homocysteine + H(+). It carries out the reaction a 3-(all-trans-polyprenyl)benzene-1,2-diol + S-adenosyl-L-methionine = a 2-methoxy-6-(all-trans-polyprenyl)phenol + S-adenosyl-L-homocysteine + H(+). The protein operates within cofactor biosynthesis; ubiquinone biosynthesis. Its function is as follows. O-methyltransferase that catalyzes the 2 O-methylation steps in the ubiquinone biosynthetic pathway. The protein is Ubiquinone biosynthesis O-methyltransferase of Roseobacter denitrificans (strain ATCC 33942 / OCh 114) (Erythrobacter sp. (strain OCh 114)).